Reading from the N-terminus, the 906-residue chain is Ectonucleotide pyrophosphatase/phosphodiesterase family member 1 (906 aa).

The disordered stretch occupies residues 1-25; it reads MERDGEQAGQGPRHGPAGNGRELES. The Cytoplasmic segment spans residues 1-58; the sequence is MERDGEQAGQGPRHGPAGNGRELESPAAASLLAPMDLGEEPLEKAERARTAKDPNTYK. Position 25 is a phosphoserine (Ser25). The short motif at 27–34 is the Di-leucine motif element; the sequence is AAASLLAP. The chain crosses the membrane as a helical; Signal-anchor for type II membrane protein span at residues 59-79; that stretch reads VLSLVLSVCVLTTILGCIFGL. Over 80–906 the chain is Extracellular; sequence KPSCAKEVKS…THLPIFSQED (827 aa). 2 SMB domains span residues 86-126 and 127-170; these read EVKS…VEPT and HIWT…QEKK. Cystine bridges form between Cys90–Cys104, Cys94–Cys122, Cys102–Cys115, Cys108–Cys114, Cys131–Cys148, Cys136–Cys166, Cys146–Cys159, Cys152–Cys158, Cys177–Cys223, and Cys185–Cys397. N-linked (GlcNAc...) asparagine glycosylation occurs at Asn161. The tract at residues 173 to 573 is phosphodiesterase; the sequence is VEEACETIDA…APNNESHGSL (401 aa). Asp200, Thr238, and Asn259 together coordinate AMP. 2 residues coordinate Zn(2+): Asp200 and Thr238. Thr238 acts as the AMP-threonine intermediate in catalysis. CMP-binding residues include Thr238 and Asn259. Residues Thr238 and Asn259 each contribute to the dTMP site. Positions 238 and 259 each coordinate GMP. Thr238 bears the Phosphothreonine mark. An N-linked (GlcNAc...) asparagine glycan is attached at Asn267. Residues Leu272, Lys277, and Tyr322 each contribute to the GMP site. Lys277 and Tyr322 together coordinate AMP. The CMP site is built by Lys277 and Tyr322. Residue Tyr322 coordinates dTMP. Residue Asn323 is glycosylated (N-linked (GlcNAc...) asparagine). Asp358 lines the AMP pocket. Residues Asp358, His362, Asp405, and His406 each contribute to the Zn(2+) site. Asp358 contacts CMP. A dTMP-binding site is contributed by Asp358. Asp358 lines the GMP pocket. His362 contributes to the 2',3'-cGAMP binding site. AMP is bound at residue His406. His406 lines the CMP pocket. Position 406 (His406) interacts with dTMP. Residue His406 participates in GMP binding. 6 cysteine pairs are disulfide-bonded: Cys413/Cys512, Cys462/Cys849, Cys596/Cys653, Cys607/Cys707, Cys609/Cys692, and Cys819/Cys829. Residue Asn459 is glycosylated (N-linked (GlcNAc...) asparagine). Ser514 is a 2',3'-cGAMP binding site. Residue His517 coordinates AMP. His517 provides a ligand contact to Zn(2+). His517 provides a ligand contact to CMP. His517 contacts dTMP. Residue His517 coordinates GMP. 2 N-linked (GlcNAc...) asparagine glycosylation sites follow: Asn567 and Asn624. The linker stretch occupies residues 579 to 628; it reads KPIYTPSHPKEESFLSQCPIKSVSSDLGCTCDPSIVPIMDFEKQFNLTTD. Residues 635–906 are nuclease-like domain; sequence SMTVPNGRPR…THLPIFSQED (272 aa). Residues Asp781, Asp783, Asp785, Arg787, and Asp789 each contribute to the Ca(2+) site.

This sequence belongs to the nucleotide pyrophosphatase/phosphodiesterase family. As to quaternary structure, ectonucleotide pyrophosphatase/phosphodiesterase family member 1: Homodimer. Ectonucleotide pyrophosphatase/phosphodiesterase family member 1: Interacts with INSR; leading to inhibit INSR autophosphorylation and subsequent activation of INSR kinase activity. Ectonucleotide pyrophosphatase/phosphodiesterase family member 1, secreted form: Monomeric. Requires Zn(2+) as cofactor. Post-translationally, the secreted form is produced through cleavage at Lys-85 by intracellular processing.

It is found in the cell membrane. The protein localises to the basolateral cell membrane. The protein resides in the secreted. It catalyses the reaction Hydrolytically removes 5'-nucleotides successively from the 3'-hydroxy termini of 3'-hydroxy-terminated oligonucleotides.. The enzyme catalyses a ribonucleoside 5'-triphosphate + H2O = a ribonucleoside 5'-phosphate + diphosphate + H(+). The catalysed reaction is ATP + H2O = AMP + diphosphate + H(+). It carries out the reaction UTP + H2O = UMP + diphosphate + H(+). It catalyses the reaction GTP + H2O = GMP + diphosphate + H(+). The enzyme catalyses CTP + H2O = CMP + diphosphate + H(+). The catalysed reaction is 2',3'-cGAMP + 2 H2O = GMP + AMP + 2 H(+). It carries out the reaction P(1),P(4)-bis(5'-adenosyl) tetraphosphate + H2O = AMP + ATP + 2 H(+). It catalyses the reaction 3',5'-cyclic AMP + H2O = AMP + H(+). Its activity is regulated as follows. At low concentrations of ATP, a phosphorylated intermediate is formed which inhibits further hydrolysis. In terms of biological role, nucleotide pyrophosphatase that generates diphosphate (PPi) and functions in bone mineralization and soft tissue calcification by regulating pyrophosphate levels. PPi inhibits bone mineralization and soft tissue calcification by binding to nascent hydroxyapatite crystals, thereby preventing further growth of these crystals. Preferentially hydrolyzes ATP, but can also hydrolyze other nucleoside 5' triphosphates such as GTP, CTP and UTP to their corresponding monophosphates with release of pyrophosphate, as well as diadenosine polyphosphates, and also 3',5'-cAMP to AMP. May also be involved in the regulation of the availability of nucleotide sugars in the endoplasmic reticulum and Golgi, and the regulation of purinergic signaling. Inhibits ectopic joint calcification and maintains articular chondrocytes by repressing hedgehog signaling; it is however unclear whether hedgehog inhibition is direct or indirect. Appears to modulate insulin sensitivity. Also involved in melanogenesis. Also able to hydrolyze 2',3'-cGAMP (cyclic GMP-AMP), a second messenger that activates TMEM173/STING and triggers type-I interferon production. 2',3'-cGAMP degradation takes place in the lumen or extracellular space, and not in the cytosol where it is produced; the role of 2',3'-cGAMP hydrolysis is therefore unclear. Not able to hydrolyze the 2',3'-cGAMP linkage isomer 3'-3'-cGAMP. This is Ectonucleotide pyrophosphatase/phosphodiesterase family member 1 from Rattus norvegicus (Rat).